A 286-amino-acid chain; its full sequence is Orotidine 5'-phosphate decarboxylase (286 aa).

Substrate is bound by residues aspartate 35, 57-59 (KTH), 89-98 (DRKFADIGNT), tyrosine 239, and arginine 257. Lysine 91 serves as the catalytic Proton donor.

The protein belongs to the OMP decarboxylase family.

It carries out the reaction orotidine 5'-phosphate + H(+) = UMP + CO2. It participates in pyrimidine metabolism; UMP biosynthesis via de novo pathway; UMP from orotate: step 2/2. This Yarrowia lipolytica (strain CLIB 122 / E 150) (Yeast) protein is Orotidine 5'-phosphate decarboxylase (URA3).